The following is a 328-amino-acid chain: Bifunctional phosphopantetheine adenylyltransferase/NTP phosphatase (328 aa).

The interval 1–152 (MITVVGGTFS…GNGRRLKPVK (152 aa)) is phosphopantetheine adenylyltransferase. Residues 153–328 (VAIATNNSAK…DFYDTTYTPP (176 aa)) form an inosine/xanthosine triphosphatase region.

In the N-terminal section; belongs to the eukaryotic CoaD family. This sequence in the C-terminal section; belongs to the YjjX NTPase family. It depends on Mg(2+) as a cofactor. The cofactor is Mn(2+).

It localises to the cytoplasm. The enzyme catalyses (R)-4'-phosphopantetheine + ATP + H(+) = 3'-dephospho-CoA + diphosphate. It catalyses the reaction XTP + H2O = XDP + phosphate + H(+). The catalysed reaction is ITP + H2O = IDP + phosphate + H(+). It functions in the pathway cofactor biosynthesis; coenzyme A biosynthesis. Functionally, reversibly transfers an adenylyl group from ATP to 4'-phosphopantetheine, yielding dephospho-CoA (dPCoA) and pyrophosphate. In terms of biological role, phosphatase that hydrolyzes non-canonical purine nucleotides such as XTP and ITP to their respective diphosphate derivatives. Probably excludes non-canonical purines from DNA/RNA precursor pool, thus preventing their incorporation into DNA/RNA and avoiding chromosomal lesions. The protein is Bifunctional phosphopantetheine adenylyltransferase/NTP phosphatase (coaD) of Thermoplasma volcanium (strain ATCC 51530 / DSM 4299 / JCM 9571 / NBRC 15438 / GSS1).